The sequence spans 394 residues: NAD(P)H-quinone oxidoreductase subunit H (394 aa).

Belongs to the complex I 49 kDa subunit family. NDH-1 can be composed of about 15 different subunits; different subcomplexes with different compositions have been identified which probably have different functions.

It is found in the cellular thylakoid membrane. It catalyses the reaction a plastoquinone + NADH + (n+1) H(+)(in) = a plastoquinol + NAD(+) + n H(+)(out). It carries out the reaction a plastoquinone + NADPH + (n+1) H(+)(in) = a plastoquinol + NADP(+) + n H(+)(out). Its function is as follows. NDH-1 shuttles electrons from an unknown electron donor, via FMN and iron-sulfur (Fe-S) centers, to quinones in the respiratory and/or the photosynthetic chain. The immediate electron acceptor for the enzyme in this species is believed to be plastoquinone. Couples the redox reaction to proton translocation, and thus conserves the redox energy in a proton gradient. Cyanobacterial NDH-1 also plays a role in inorganic carbon-concentration. The polypeptide is NAD(P)H-quinone oxidoreductase subunit H (Thermosynechococcus vestitus (strain NIES-2133 / IAM M-273 / BP-1)).